We begin with the raw amino-acid sequence, 291 residues long: Co-chaperone protein DjlA (291 aa).

The Periplasmic segment spans residues 1-6 (MRYWGK). A helical membrane pass occupies residues 7–31 (LLGLALGIVSSTGIWGMIMGLLMGH). At 32 to 291 (WIDRARASRR…ELLKSANQTK (260 aa)) the chain is on the cytoplasmic side. The segment at 177–223 (ESPTGQQSRQNQSRQNGKSQQRRNNGYSNGHSYGGQRPPSPLRGPTV) is disordered. The span at 181–211 (GQQSRQNQSRQNGKSQQRRNNGYSNGHSYGG) shows a compositional bias: low complexity. In terms of domain architecture, J spans 225 to 291 (SACRTLGVRS…ELLKSANQTK (67 aa)).

Homodimer.

The protein localises to the cell inner membrane. Functionally, regulatory DnaK co-chaperone. Direct interaction between DnaK and DjlA is needed for the induction of the wcaABCDE operon, involved in the synthesis of a colanic acid polysaccharide capsule, possibly through activation of the RcsB/RcsC phosphotransfer signaling pathway. The colanic acid capsule may help the bacterium survive conditions outside the host. The polypeptide is Co-chaperone protein DjlA (Pectobacterium atrosepticum (strain SCRI 1043 / ATCC BAA-672) (Erwinia carotovora subsp. atroseptica)).